The following is a 217-amino-acid chain: Putative oxidative stress regulator AosR (217 aa).

Positions C5–C9 match the CXXXC motif. An intrachain disulfide couples C5 to C9.

It belongs to the AosR family.

The polypeptide is Putative oxidative stress regulator AosR (Mycobacterium leprae (strain TN)).